Consider the following 213-residue polypeptide: Putative amidate substrates transporter protein (213 aa).

Helical transmembrane passes span 4–20 (VGLFYVGAVLIIDGLML), 32–48 (LNFFVGGLQVVTPTVLI), 56–72 (AVIFAASGLYLFGFTYL), 116–132 (VIWLLWAVLWFMLFLLL), 146–162 (VAVAEGVITAAVPAFLI), and 172–188 (LPAAVIAVIGFAAVVLA).

Belongs to the AmiS/UreI family.

The protein localises to the cell membrane. Possible transporter that might be responsible for the adsorption of amidase substrates or release of their hydrolysis products. This chain is Putative amidate substrates transporter protein, found in Mycolicibacterium smegmatis (Mycobacterium smegmatis).